We begin with the raw amino-acid sequence, 343 residues long: C-X-C chemokine receptor type 6 (343 aa).

Residues 1–33 are Extracellular-facing; that stretch reads MAEYDHYEDDGFLNSFNDSSQEEHQDFLQFRKV. An N-linked (GlcNAc...) asparagine glycan is attached at asparagine 17. Residues 34–60 form a helical membrane-spanning segment; that stretch reads FLPCMYLVVFVCGLVGNSLVLVISIFY. At 61-69 the chain is on the cytoplasmic side; that stretch reads HKLQSLTDV. The chain crosses the membrane as a helical span at residues 70-90; the sequence is FLVNLPLADLVFVCTLPFWTY. At 91–104 the chain is on the extracellular side; that stretch reads AGIHEWIFGQVMCK. The cysteines at positions 103 and 181 are disulfide-linked. The helical transmembrane segment at 105–126 threads the bilayer; the sequence is TLLGVYTINFYTSMLILTCITV. The Cytoplasmic segment spans residues 127-144; that stretch reads DRFIVVVKATKAYNQQAK. A helical membrane pass occupies residues 145–165; it reads RMTWGKVICLLIWVISLLVSL. The Extracellular segment spans residues 166–188; that stretch reads PQIIYGNVFNLDKLICGYHDEEI. A helical membrane pass occupies residues 189–216; the sequence is STVVLATQMTLGFFLPLLAMIVCYSVII. The Cytoplasmic segment spans residues 217–232; that stretch reads KTLLHAGGFQKHRSLK. Residues 233–260 form a helical membrane-spanning segment; the sequence is IIFLVMAVFLLTQTPFNLVKLIRSTRWE. The Extracellular segment spans residues 261 to 276; that stretch reads YYAMTSFHYTIIVTEA. A helical membrane pass occupies residues 277 to 294; the sequence is IAYLRACLNPVLYAFVSL. The Cytoplasmic segment spans residues 295-343; the sequence is KFRKNFWKLVKDIGCLPYLGVSHQWKSSEDNSKTFSASHNVEATSMFQL.

The protein belongs to the G-protein coupled receptor 1 family.

Its subcellular location is the cell membrane. In terms of biological role, receptor for the C-X-C chemokine CXCL16. Used as a coreceptor by SIVs and by strains of HIV-2 and m-tropic HIV-1. The polypeptide is C-X-C chemokine receptor type 6 (CXCR6) (Macaca fascicularis (Crab-eating macaque)).